We begin with the raw amino-acid sequence, 600 residues long: Aspartate--tRNA(Asp/Asn) ligase (600 aa).

Residue glutamate 187 coordinates L-aspartate. Residues 211–214 (QIFK) are aspartate. Arginine 233 and histidine 463 together coordinate L-aspartate. 233-235 (RDE) is an ATP binding site. Position 497 (glutamate 497) interacts with ATP. Arginine 504 lines the L-aspartate pocket. 549–552 (GIDR) serves as a coordination point for ATP.

This sequence belongs to the class-II aminoacyl-tRNA synthetase family. Type 1 subfamily. In terms of assembly, homodimer.

It localises to the cytoplasm. It carries out the reaction tRNA(Asx) + L-aspartate + ATP = L-aspartyl-tRNA(Asx) + AMP + diphosphate. Aspartyl-tRNA synthetase with relaxed tRNA specificity since it is able to aspartylate not only its cognate tRNA(Asp) but also tRNA(Asn). Reaction proceeds in two steps: L-aspartate is first activated by ATP to form Asp-AMP and then transferred to the acceptor end of tRNA(Asp/Asn). The polypeptide is Aspartate--tRNA(Asp/Asn) ligase (Wolbachia sp. subsp. Brugia malayi (strain TRS)).